The following is a 518-amino-acid chain: Protein PAC2 (518 aa).

The CAP-Gly domain occupies Val23 to Lys67. 8 LRR repeats span residues Asn153–Ile174, Asn179–Asp201, His204–Phe227, Thr229–Ile252, Thr255–Leu276, Thr277–Ser298, Val299–Asn319, and Ser324–Glu345.

The protein localises to the cytoplasm. It localises to the cytoskeleton. In terms of biological role, required for viability in the absence of the kinesin-related CIN8 mitotic motor. Seems to be involved in the assembly of alpha-tubulin. This Saccharomyces cerevisiae (strain ATCC 204508 / S288c) (Baker's yeast) protein is Protein PAC2 (PAC2).